A 631-amino-acid polypeptide reads, in one-letter code: Plastidic ATP/ADP-transporter (631 aa).

Transmembrane regions (helical) follow at residues 106-126, 149-169, 180-200, 238-258, 271-290, 313-333, 369-389, 407-427, 442-462, 465-485, and 543-563; these read IELVTLKKIIPLGAMFFCILF, IIPFLKTWVNLPMAIGFMLLY, ALFYTVILPFIAFFGAFGFVL, LFYVMAELWGSVVVSVLFWGF, FYPLFGLGANVALIFSGRTV, GMMSIVVMMGGAICFFYWWVN, LATLVVAYGISINLVEVTWKS, DFSTATGIATFTMMLLSQWIF, VLLLTGVGFFSLLLFGAPLAP, AKFGMTPLLAAVYVGAMQNIF, and LASSTPYLGGVLLVIVLAWLG. A disordered region spans residues 586–631; the sequence is ERASLKIPVVSQNENGNGPLSSESSLNPAGGDSTNASSEPSSPRSL. Residues 595 to 631 show a composition bias toward polar residues; sequence VSQNENGNGPLSSESSLNPAGGDSTNASSEPSSPRSL.

It belongs to the ADP/ATP translocase tlc (TC 2.A.12.2) family.

Its subcellular location is the plastid. It is found in the chloroplast membrane. In Solanum tuberosum (Potato), this protein is Plastidic ATP/ADP-transporter.